The chain runs to 396 residues: Mevalonate kinase (396 aa).

ATP contacts are provided by residues K13, N55, S135, and 140 to 146 (GAGLGSS). S146 acts as the Proton donor in catalysis. 2 residues coordinate Mg(2+): S146 and E193. D204 (proton acceptor) is an active-site residue.

It belongs to the GHMP kinase family. Mevalonate kinase subfamily. In terms of assembly, homodimer. Mg(2+) serves as cofactor.

It localises to the cytoplasm. Its subcellular location is the peroxisome. The enzyme catalyses (R)-mevalonate + ATP = (R)-5-phosphomevalonate + ADP + H(+). It functions in the pathway isoprenoid biosynthesis; isopentenyl diphosphate biosynthesis via mevalonate pathway; isopentenyl diphosphate from (R)-mevalonate: step 1/3. With respect to regulation, farnesyl pyrophosphate and geranyl pyrophosphate inhibit mevalonate kinase activity by binding competitively at the ATP-binding sites. Catalyzes the phosphorylation of mevalonate to mevalonate 5-phosphate, a key step in isoprenoid and cholesterol biosynthesis. This chain is Mevalonate kinase, found in Homo sapiens (Human).